We begin with the raw amino-acid sequence, 336 residues long: Glucokinase (336 aa).

Residue 12 to 17 (ADIGGT) coordinates ATP.

Belongs to the bacterial glucokinase family.

Its subcellular location is the cytoplasm. The enzyme catalyses D-glucose + ATP = D-glucose 6-phosphate + ADP + H(+). This chain is Glucokinase, found in Helicobacter pylori (strain ATCC 700392 / 26695) (Campylobacter pylori).